The primary structure comprises 126 residues: UPF0102 protein HD_0802 (126 aa).

This sequence belongs to the UPF0102 family.

This Haemophilus ducreyi (strain 35000HP / ATCC 700724) protein is UPF0102 protein HD_0802.